Here is a 293-residue protein sequence, read N- to C-terminus: Pyridoxal 5'-phosphate synthase subunit PdxS (293 aa).

Asp-23 contacts D-ribose 5-phosphate. Lys-80 serves as the catalytic Schiff-base intermediate with D-ribose 5-phosphate. Position 152 (Gly-152) interacts with D-ribose 5-phosphate. D-glyceraldehyde 3-phosphate is bound at residue Arg-164. D-ribose 5-phosphate is bound by residues Gly-213 and 234-235; that span reads GS.

Belongs to the PdxS/SNZ family. In terms of assembly, in the presence of PdxT, forms a dodecamer of heterodimers.

The catalysed reaction is aldehydo-D-ribose 5-phosphate + D-glyceraldehyde 3-phosphate + L-glutamine = pyridoxal 5'-phosphate + L-glutamate + phosphate + 3 H2O + H(+). It participates in cofactor biosynthesis; pyridoxal 5'-phosphate biosynthesis. Its function is as follows. Catalyzes the formation of pyridoxal 5'-phosphate from ribose 5-phosphate (RBP), glyceraldehyde 3-phosphate (G3P) and ammonia. The ammonia is provided by the PdxT subunit. Can also use ribulose 5-phosphate and dihydroxyacetone phosphate as substrates, resulting from enzyme-catalyzed isomerization of RBP and G3P, respectively. This Dehalococcoides mccartyi (strain ATCC BAA-2100 / JCM 16839 / KCTC 5957 / BAV1) protein is Pyridoxal 5'-phosphate synthase subunit PdxS.